The sequence spans 312 residues: MLQYQIDRIDHQIADDRSQTGTFLIGPLERGQATTLGNSLRRVLMGGLEGSAVTAVRIAGINHEYATIPGVREDVLDILLNCKQLSINSSNPELEIGRLVASGPMEVKANDIQFSSQVEIVDGEKPIATIQEGHNLELEIHVERGVGYRPVDRKSEETTAIDLLQIDAVFMPVKRVNFTIDETAVAEGATGRERLKMEVVTDGSTSPDDAIAEAANQLIELFQPLATVTMVEEIPEEPEPSPEAQIPLEELNLSVRAYNCLKRAQVNSVSDLMGFSYEDLLEIKNFGSKSADEVIEALERIGISIPQSRTSV.

Residues 1-229 (MLQYQIDRID…ELFQPLATVT (229 aa)) are alpha N-terminal domain (alpha-NTD). Residues 240 to 312 (PSPEAQIPLE…ISIPQSRTSV (73 aa)) form an alpha C-terminal domain (alpha-CTD) region.

It belongs to the RNA polymerase alpha chain family. In terms of assembly, in cyanobacteria the RNAP catalytic core is composed of 2 alpha, 1 beta, 1 beta', 1 gamma and 1 omega subunit. When a sigma factor is associated with the core the holoenzyme is formed, which can initiate transcription.

It catalyses the reaction RNA(n) + a ribonucleoside 5'-triphosphate = RNA(n+1) + diphosphate. Its function is as follows. DNA-dependent RNA polymerase catalyzes the transcription of DNA into RNA using the four ribonucleoside triphosphates as substrates. The chain is DNA-directed RNA polymerase subunit alpha from Prochlorococcus marinus (strain AS9601).